Here is a 184-residue protein sequence, read N- to C-terminus: MVRYSLDPENPTKSCKSRGSNLRVHFKNTRETAQAIKGMHIRKATKYLKDVTLKKQCVPFRRYNGGVGRCAQAKQWGWTQGRWPKKSAEFLLHMLKNAESNAELKGLDVDSLVIEHIQVNKAPKMRRRTYRAHGRINPYMSSPCHIEMILTEKEQIVPKPEEEVAQKKKISQKKLKKQKLMARE.

Residues 160–184 are disordered; the sequence is PEEEVAQKKKISQKKLKKQKLMARE. Basic residues predominate over residues 167–184; the sequence is KKKISQKKLKKQKLMARE.

This sequence belongs to the universal ribosomal protein uL22 family. Component of the large ribosomal subunit.

Its subcellular location is the cytoplasm. Its function is as follows. Component of the large ribosomal subunit. The ribosome is a large ribonucleoprotein complex responsible for the synthesis of proteins in the cell. This is Large ribosomal subunit protein uL22 (RPL17) from Bos taurus (Bovine).